Consider the following 465-residue polypeptide: Phenylalanine--tRNA ligase alpha subunit (465 aa).

L-phenylalanine is bound by residues Thr309, 348–350 (QLD), and Phe388. Residue Glu390 coordinates Mg(2+).

This sequence belongs to the class-II aminoacyl-tRNA synthetase family. Phe-tRNA synthetase alpha subunit type 2 subfamily. As to quaternary structure, tetramer of two alpha and two beta subunits. Mg(2+) serves as cofactor.

The protein localises to the cytoplasm. The catalysed reaction is tRNA(Phe) + L-phenylalanine + ATP = L-phenylalanyl-tRNA(Phe) + AMP + diphosphate + H(+). This chain is Phenylalanine--tRNA ligase alpha subunit, found in Sulfolobus acidocaldarius (strain ATCC 33909 / DSM 639 / JCM 8929 / NBRC 15157 / NCIMB 11770).